Consider the following 438-residue polypeptide: tRNA modification GTPase MnmE (438 aa).

(6S)-5-formyl-5,6,7,8-tetrahydrofolate contacts are provided by Arg21, Glu79, and Lys118. Residues Gly215–Arg362 enclose the TrmE-type G domain. Asn225 contacts K(+). Residues Asn225–Ser230, Thr244–Thr250, and Asp269–Gly272 contribute to the GTP site. Position 229 (Ser229) interacts with Mg(2+). Residues Thr244, Ile246, and Thr249 each coordinate K(+). Thr250 contributes to the Mg(2+) binding site. Lys438 contacts (6S)-5-formyl-5,6,7,8-tetrahydrofolate.

Belongs to the TRAFAC class TrmE-Era-EngA-EngB-Septin-like GTPase superfamily. TrmE GTPase family. In terms of assembly, homodimer. Heterotetramer of two MnmE and two MnmG subunits. K(+) serves as cofactor.

The protein localises to the cytoplasm. Its function is as follows. Exhibits a very high intrinsic GTPase hydrolysis rate. Involved in the addition of a carboxymethylaminomethyl (cmnm) group at the wobble position (U34) of certain tRNAs, forming tRNA-cmnm(5)s(2)U34. This chain is tRNA modification GTPase MnmE, found in Maricaulis maris (strain MCS10) (Caulobacter maris).